The primary structure comprises 430 residues: Adenylosuccinate synthetase (430 aa).

Residues 12-18 (GDEGKGK) and 40-42 (GHT) contribute to the GTP site. Asp13 functions as the Proton acceptor in the catalytic mechanism. Residues Asp13 and Gly40 each coordinate Mg(2+). IMP contacts are provided by residues 13 to 16 (DEGK), 38 to 41 (NAGH), Thr128, Arg142, Gln223, Thr238, and Arg302. His41 (proton donor) is an active-site residue. 298–304 (TTTGRPR) lines the substrate pocket. GTP is bound by residues Arg304, 330-332 (SID), and 412-414 (SVG).

The protein belongs to the adenylosuccinate synthetase family. As to quaternary structure, homodimer. Requires Mg(2+) as cofactor.

Its subcellular location is the cytoplasm. The enzyme catalyses IMP + L-aspartate + GTP = N(6)-(1,2-dicarboxyethyl)-AMP + GDP + phosphate + 2 H(+). Its pathway is purine metabolism; AMP biosynthesis via de novo pathway; AMP from IMP: step 1/2. Its function is as follows. Plays an important role in the de novo pathway of purine nucleotide biosynthesis. Catalyzes the first committed step in the biosynthesis of AMP from IMP. This Streptococcus gordonii (strain Challis / ATCC 35105 / BCRC 15272 / CH1 / DL1 / V288) protein is Adenylosuccinate synthetase.